A 404-amino-acid polypeptide reads, in one-letter code: Propionate kinase (404 aa).

It belongs to the acetokinase family. PduW subfamily.

It is found in the cytoplasm. It carries out the reaction propanoate + ATP = propanoyl phosphate + ADP. It participates in polyol metabolism; 1,2-propanediol degradation. Its function is as follows. Works with phosphate acetyltransferase (pta) to capture exogenous propionate and regenerate propionyl-CoA during degradation of 1,2-propanediol (1,2-PD). The chain is Propionate kinase from Citrobacter koseri (strain ATCC BAA-895 / CDC 4225-83 / SGSC4696).